The sequence spans 101 residues: NADH-quinone oxidoreductase subunit K (101 aa).

Transmembrane regions (helical) follow at residues 4 to 24, 30 to 50, and 61 to 81; these read LGYF…GIII, IVLL…FIAF, and IFVF…LAIL.

Belongs to the complex I subunit 4L family. NDH-1 is composed of 14 different subunits. Subunits NuoA, H, J, K, L, M, N constitute the membrane sector of the complex.

The protein localises to the cell inner membrane. It carries out the reaction a quinone + NADH + 5 H(+)(in) = a quinol + NAD(+) + 4 H(+)(out). In terms of biological role, NDH-1 shuttles electrons from NADH, via FMN and iron-sulfur (Fe-S) centers, to quinones in the respiratory chain. The immediate electron acceptor for the enzyme in this species is believed to be ubiquinone. Couples the redox reaction to proton translocation (for every two electrons transferred, four hydrogen ions are translocated across the cytoplasmic membrane), and thus conserves the redox energy in a proton gradient. The chain is NADH-quinone oxidoreductase subunit K from Coxiella burnetii (strain CbuG_Q212) (Coxiella burnetii (strain Q212)).